A 184-amino-acid polypeptide reads, in one-letter code: Large ribosomal subunit protein uL6 (184 aa).

This sequence belongs to the universal ribosomal protein uL6 family. Part of the 50S ribosomal subunit.

This protein binds to the 23S rRNA, and is important in its secondary structure. It is located near the subunit interface in the base of the L7/L12 stalk, and near the tRNA binding site of the peptidyltransferase center. This is Large ribosomal subunit protein uL6 from Fervidobacterium nodosum (strain ATCC 35602 / DSM 5306 / Rt17-B1).